The following is a 264-amino-acid chain: Thymidylate synthase (264 aa).

DUMP is bound at residue R21. Residue H51 coordinates (6R)-5,10-methylene-5,6,7,8-tetrahydrofolate. A dUMP-binding site is contributed by 126–127 (RR). The active-site Nucleophile is the C146. DUMP is bound by residues 166–169 (RSCD), N177, and 207–209 (HLY). D169 contributes to the (6R)-5,10-methylene-5,6,7,8-tetrahydrofolate binding site. A263 serves as a coordination point for (6R)-5,10-methylene-5,6,7,8-tetrahydrofolate.

It belongs to the thymidylate synthase family. Bacterial-type ThyA subfamily. In terms of assembly, homodimer.

Its subcellular location is the cytoplasm. The enzyme catalyses dUMP + (6R)-5,10-methylene-5,6,7,8-tetrahydrofolate = 7,8-dihydrofolate + dTMP. The protein operates within pyrimidine metabolism; dTTP biosynthesis. Its function is as follows. Catalyzes the reductive methylation of 2'-deoxyuridine-5'-monophosphate (dUMP) to 2'-deoxythymidine-5'-monophosphate (dTMP) while utilizing 5,10-methylenetetrahydrofolate (mTHF) as the methyl donor and reductant in the reaction, yielding dihydrofolate (DHF) as a by-product. This enzymatic reaction provides an intracellular de novo source of dTMP, an essential precursor for DNA biosynthesis. In Buchnera aphidicola subsp. Baizongia pistaciae (strain Bp), this protein is Thymidylate synthase.